Consider the following 313-residue polypeptide: D-alanine--D-alanine ligase (313 aa).

The ATP-grasp domain maps to 104 to 304 (KQALVPHGIP…YSDLVEAIIA (201 aa)). An ATP-binding site is contributed by 130-187 (PLPRPYVLKPVNEGSSVGVAIVTAEGNYGSPISAASKGPWQEFDQLLAEPFIRGRELT). Residues Asp-255, Glu-271, and Asn-273 each contribute to the Mg(2+) site.

It belongs to the D-alanine--D-alanine ligase family. Requires Mg(2+) as cofactor. Mn(2+) is required as a cofactor.

The protein resides in the cytoplasm. The enzyme catalyses 2 D-alanine + ATP = D-alanyl-D-alanine + ADP + phosphate + H(+). It participates in cell wall biogenesis; peptidoglycan biosynthesis. Its function is as follows. Cell wall formation. This chain is D-alanine--D-alanine ligase, found in Novosphingobium aromaticivorans (strain ATCC 700278 / DSM 12444 / CCUG 56034 / CIP 105152 / NBRC 16084 / F199).